A 638-amino-acid chain; its full sequence is Exocyst complex component EXO70A1 (638 aa).

Positions 163-190 (FDGLPNSLRPSSDGDGGGKPHGGHHNDD) are disordered.

This sequence belongs to the EXO70 family. As to quaternary structure, the exocyst complex is composed of SEC3, SEC5, SEC6, SEC8, SEC10, EXO70A1 and EXO84B. Interacts with SEC3A and EXO84B. Co-localizes with FPP3/VETH1, FPP2/VETH2 and COG2 in vesicle-like small motile compartments. May interact with COG2.

The protein localises to the cytoplasm. It localises to the cytosol. It is found in the cytoskeleton. The protein resides in the phragmoplast. Its subcellular location is the cell membrane. The protein localises to the secreted. It localises to the cell wall. Functionally, component of the exocyst complex involved in the docking of exocytic vesicles with fusion sites on the plasma membrane during regulated or polarized secretion. Involved in polarized cell growth and organ morphogenesis. Involved in polarized cell growth and organ morphogenesis. During cytokinesis, involved in cell plate initiation, cell plate maturation and formation of new primary cell wall. Participates in polarized pectin delivery required for the polarized development of the mucilage-producing volcano cells of the seed coat. Involved in the recycling and localization of auxin efflux carriers PIN1 and PIN2, and thus in polar auxin transport regulation. Functions in vesicle trafficking in tracheary elements to regulate patterned secondary cell wall (SCW) thickening. This chain is Exocyst complex component EXO70A1, found in Arabidopsis thaliana (Mouse-ear cress).